The sequence spans 454 residues: Bifunctional protein GlmU (454 aa).

Positions 1-225 (MNIVILAAGM…LWETLGVNSK (225 aa)) are pyrophosphorylase. UDP-N-acetyl-alpha-D-glucosamine is bound by residues 6 to 9 (LAAG), K20, Q71, 76 to 77 (GT), 98 to 100 (YGD), G135, E150, N165, and N223. A Mg(2+)-binding site is contributed by D100. N223 lines the Mg(2+) pocket. Residues 226-246 (VQLAEVERIHQRNLAQRLLET) form a linker region. Residues 247 to 454 (GVTLADPARI…WQRPVKKAKQ (208 aa)) are N-acetyltransferase. Residues R329 and K347 each coordinate UDP-N-acetyl-alpha-D-glucosamine. The active-site Proton acceptor is H359. Positions 362 and 373 each coordinate UDP-N-acetyl-alpha-D-glucosamine. Acetyl-CoA-binding positions include A376, 382–383 (NY), S401, A419, and R436.

It in the N-terminal section; belongs to the N-acetylglucosamine-1-phosphate uridyltransferase family. The protein in the C-terminal section; belongs to the transferase hexapeptide repeat family. Homotrimer. It depends on Mg(2+) as a cofactor.

It localises to the cytoplasm. It carries out the reaction alpha-D-glucosamine 1-phosphate + acetyl-CoA = N-acetyl-alpha-D-glucosamine 1-phosphate + CoA + H(+). The enzyme catalyses N-acetyl-alpha-D-glucosamine 1-phosphate + UTP + H(+) = UDP-N-acetyl-alpha-D-glucosamine + diphosphate. Its pathway is nucleotide-sugar biosynthesis; UDP-N-acetyl-alpha-D-glucosamine biosynthesis; N-acetyl-alpha-D-glucosamine 1-phosphate from alpha-D-glucosamine 6-phosphate (route II): step 2/2. It participates in nucleotide-sugar biosynthesis; UDP-N-acetyl-alpha-D-glucosamine biosynthesis; UDP-N-acetyl-alpha-D-glucosamine from N-acetyl-alpha-D-glucosamine 1-phosphate: step 1/1. The protein operates within bacterial outer membrane biogenesis; LPS lipid A biosynthesis. Catalyzes the last two sequential reactions in the de novo biosynthetic pathway for UDP-N-acetylglucosamine (UDP-GlcNAc). The C-terminal domain catalyzes the transfer of acetyl group from acetyl coenzyme A to glucosamine-1-phosphate (GlcN-1-P) to produce N-acetylglucosamine-1-phosphate (GlcNAc-1-P), which is converted into UDP-GlcNAc by the transfer of uridine 5-monophosphate (from uridine 5-triphosphate), a reaction catalyzed by the N-terminal domain. The protein is Bifunctional protein GlmU of Cupriavidus pinatubonensis (strain JMP 134 / LMG 1197) (Cupriavidus necator (strain JMP 134)).